The following is a 288-amino-acid chain: MLPVSVKSFAKINLGLLITSKRSDGYHTLETVFAPIDWYDTLEFSPSDTLSMCCTDSALPVDENNLCMRAAKALQESAGCSTGVSITLDKRIPFGAGLGGGSSDAATVLGMLNEFWNVRASLADLHILAVRLGADVPYFLEMKGLAFAKGIGDELEDLSLRLPFHIVTVFPEVHISTVWAYKHFYPRFERTSPDLRPLVTALCLEGERSCLGAFENDFEPAVFDHYPGVKKVKQDLLDSGSFFASLSGSGSAVFGFFDKREDADDALMMMREQGFRTSITAPDFSMVR.

K11 is an active-site residue. ATP is bound at residue 93–103 (PFGAGLGGGSS). D135 is a catalytic residue.

The protein belongs to the GHMP kinase family. IspE subfamily.

It carries out the reaction 4-CDP-2-C-methyl-D-erythritol + ATP = 4-CDP-2-C-methyl-D-erythritol 2-phosphate + ADP + H(+). The protein operates within isoprenoid biosynthesis; isopentenyl diphosphate biosynthesis via DXP pathway; isopentenyl diphosphate from 1-deoxy-D-xylulose 5-phosphate: step 3/6. Catalyzes the phosphorylation of the position 2 hydroxy group of 4-diphosphocytidyl-2C-methyl-D-erythritol. The protein is 4-diphosphocytidyl-2-C-methyl-D-erythritol kinase of Chlorobium limicola (strain DSM 245 / NBRC 103803 / 6330).